A 393-amino-acid chain; its full sequence is Formate-dependent phosphoribosylglycinamide formyltransferase (393 aa).

N(1)-(5-phospho-beta-D-ribosyl)glycinamide contacts are provided by residues 22 to 23 and Glu-82; that span reads EL. Residues Arg-114, Lys-155, 160–165, 195–198, and Glu-203 contribute to the ATP site; these read SSGHGQ and EGFV. One can recognise an ATP-grasp domain in the interval 119 to 308; sequence RLAAEELGLP…QFALHARAVL (190 aa). 2 residues coordinate Mg(2+): Glu-267 and Glu-279. Residues Asp-286, Lys-356, and 363–364 contribute to the N(1)-(5-phospho-beta-D-ribosyl)glycinamide site; that span reads RR.

It belongs to the PurK/PurT family. In terms of assembly, homodimer.

The catalysed reaction is N(1)-(5-phospho-beta-D-ribosyl)glycinamide + formate + ATP = N(2)-formyl-N(1)-(5-phospho-beta-D-ribosyl)glycinamide + ADP + phosphate + H(+). It participates in purine metabolism; IMP biosynthesis via de novo pathway; N(2)-formyl-N(1)-(5-phospho-D-ribosyl)glycinamide from N(1)-(5-phospho-D-ribosyl)glycinamide (formate route): step 1/1. Involved in the de novo purine biosynthesis. Catalyzes the transfer of formate to 5-phospho-ribosyl-glycinamide (GAR), producing 5-phospho-ribosyl-N-formylglycinamide (FGAR). Formate is provided by PurU via hydrolysis of 10-formyl-tetrahydrofolate. This chain is Formate-dependent phosphoribosylglycinamide formyltransferase, found in Parabacteroides distasonis (strain ATCC 8503 / DSM 20701 / CIP 104284 / JCM 5825 / NCTC 11152).